The primary structure comprises 266 residues: Thymidylate synthase (266 aa).

Position 24 (Arg24) interacts with dUMP. His54 serves as a coordination point for (6R)-5,10-methylene-5,6,7,8-tetrahydrofolate. A dUMP-binding site is contributed by 129–130 (RR). The active-site Nucleophile is the Cys149. DUMP-binding positions include 169-172 (RSAD), Asn180, and 210-212 (HIY). Position 172 (Asp172) interacts with (6R)-5,10-methylene-5,6,7,8-tetrahydrofolate. Residue Ala265 coordinates (6R)-5,10-methylene-5,6,7,8-tetrahydrofolate.

The protein belongs to the thymidylate synthase family. Bacterial-type ThyA subfamily. Homodimer.

It localises to the cytoplasm. The enzyme catalyses dUMP + (6R)-5,10-methylene-5,6,7,8-tetrahydrofolate = 7,8-dihydrofolate + dTMP. It functions in the pathway pyrimidine metabolism; dTTP biosynthesis. Functionally, catalyzes the reductive methylation of 2'-deoxyuridine-5'-monophosphate (dUMP) to 2'-deoxythymidine-5'-monophosphate (dTMP) while utilizing 5,10-methylenetetrahydrofolate (mTHF) as the methyl donor and reductant in the reaction, yielding dihydrofolate (DHF) as a by-product. This enzymatic reaction provides an intracellular de novo source of dTMP, an essential precursor for DNA biosynthesis. This Mycobacterium bovis (strain ATCC BAA-935 / AF2122/97) protein is Thymidylate synthase.